A 353-amino-acid polypeptide reads, in one-letter code: 41 kDa protein (353 aa).

Residues 132-197 (QSSHASALEQ…DNNSSDTIKD (66 aa)) form a disordered region. A compositionally biased stretch (basic and acidic residues) spans 157–169 (LDNKGKSDSENCN).

In Lactobacillus helveticus (Lactobacillus suntoryeus), this protein is 41 kDa protein.